A 455-amino-acid polypeptide reads, in one-letter code: Glutamate-1-semialdehyde 2,1-aminomutase (455 aa).

Lysine 286 is modified (N6-(pyridoxal phosphate)lysine).

Belongs to the class-III pyridoxal-phosphate-dependent aminotransferase family. HemL subfamily. As to quaternary structure, homodimer. Pyridoxal 5'-phosphate serves as cofactor.

The protein localises to the cytoplasm. It carries out the reaction (S)-4-amino-5-oxopentanoate = 5-aminolevulinate. The protein operates within porphyrin-containing compound metabolism; protoporphyrin-IX biosynthesis; 5-aminolevulinate from L-glutamyl-tRNA(Glu): step 2/2. This Clavibacter michiganensis subsp. michiganensis (strain NCPPB 382) protein is Glutamate-1-semialdehyde 2,1-aminomutase.